The following is a 125-amino-acid chain: Holo-[acyl-carrier-protein] synthase (125 aa).

The Mg(2+) site is built by Asp-8 and Glu-57.

The protein belongs to the P-Pant transferase superfamily. AcpS family. It depends on Mg(2+) as a cofactor.

It localises to the cytoplasm. The catalysed reaction is apo-[ACP] + CoA = holo-[ACP] + adenosine 3',5'-bisphosphate + H(+). In terms of biological role, transfers the 4'-phosphopantetheine moiety from coenzyme A to a Ser of acyl-carrier-protein. The protein is Holo-[acyl-carrier-protein] synthase of Nitrosospira multiformis (strain ATCC 25196 / NCIMB 11849 / C 71).